Reading from the N-terminus, the 328-residue chain is 6-phosphogluconolactonase (328 aa).

Belongs to the cycloisomerase 2 family.

The enzyme catalyses 6-phospho-D-glucono-1,5-lactone + H2O = 6-phospho-D-gluconate + H(+). It functions in the pathway carbohydrate degradation; pentose phosphate pathway; D-ribulose 5-phosphate from D-glucose 6-phosphate (oxidative stage): step 2/3. Its function is as follows. Catalyzes the hydrolysis of 6-phosphogluconolactone to 6-phosphogluconate. This is 6-phosphogluconolactonase from Photorhabdus laumondii subsp. laumondii (strain DSM 15139 / CIP 105565 / TT01) (Photorhabdus luminescens subsp. laumondii).